The chain runs to 329 residues: MSKPAMRVAVTGAAGQIGYALLFRIASGEMLGKDQPVILQLLEIPDEKAQKALKGVIMELEDCAFPLLQEVTAHADPKTAFKDADVALLVGARPRGPGMERKDLLTVNAQIFTAQGRALNEVASRNVKVLVVGNPANTNAYIAMKSAPDLPAKNFTAMLRLDHNRALSQLAGKSGKAVAGIEKLIVWGNHSPTMYPDYRFATVDGQPLAKLINDEAWNRDTFIPTVGKRGAAIIEARGLSSAASAANAAIDHVRDWVLGSNGKWVTMGIPSDGSYGIPEGIIYGFPVTTANGEYTMVKDLEVDAFSRERMDFTLKELLEERDGIKDLLK.

12-18 serves as a coordination point for NAD(+); sequence GAAGQIG. Substrate-binding residues include R95 and R101. NAD(+) is bound by residues N108, Q115, and 132 to 134; that span reads VGN. N134 and R165 together coordinate substrate. H190 acts as the Proton acceptor in catalysis.

The protein belongs to the LDH/MDH superfamily. MDH type 2 family.

It carries out the reaction (S)-malate + NAD(+) = oxaloacetate + NADH + H(+). Catalyzes the reversible oxidation of malate to oxaloacetate. This Bordetella avium (strain 197N) protein is Malate dehydrogenase.